A 211-amino-acid chain; its full sequence is MGRYIGPWVKLDRRFGVVVSGKKSAPKILARRNYPPGQHGRKYGRRKKLTEYGLRLMEKQKLKFLYGGLREKQFKKYFDMASKSKENTGEMLLQYLERRLDNVVYRLGFASTRRQARQLVAHGHVLVNGKKVNIPSYLVEPGDVIEIKEKSRDIPFIKENLENVDPRSIPSWLELDKDNFRGRVVRLPENVQEYLEIPINLQYIVEFYSKV.

In terms of domain architecture, S4 RNA-binding spans 98–161 (RRLDNVVYRL…RDIPFIKENL (64 aa)).

Belongs to the universal ribosomal protein uS4 family. Part of the 30S ribosomal subunit. Contacts protein S5. The interaction surface between S4 and S5 is involved in control of translational fidelity.

One of the primary rRNA binding proteins, it binds directly to 16S rRNA where it nucleates assembly of the body of the 30S subunit. In terms of biological role, with S5 and S12 plays an important role in translational accuracy. This Aquifex aeolicus (strain VF5) protein is Small ribosomal subunit protein uS4.